The sequence spans 723 residues: F-box protein MAX2 homolog B (723 aa).

The region spanning 2-55 is the F-box domain; it reads AKTPIPFTTLNDLPDVILSNIIAAVSDTRSRNATALVCHKWLVLERSTRTSLTL.

As to quaternary structure, part of a putative SCF (SKP1/Cullin/F-box) ubiquitin ligase complex. Interacts with KAI2IA in the presence of (-)-germacrene D. In terms of tissue distribution, mainly expressed in fully expanded leaves, lateral roots, axillary and shoot apex, and, to a lower extent, in internodes and nodes.

The protein localises to the nucleus. The protein resides in the cytoplasm. Its function is as follows. Component of SCF(ASK-cullin-F-box) E3 ubiquitin ligase complexes, which may mediate the ubiquitination and subsequent proteasomal degradation of target proteins. Is necessary for responses to strigolactones and may be involved in the ubiquitin-mediated degradation of specific proteins that activate axillary growth. Targets probably SMAX1A to degradation upon the formation of an E3 SCF ubiquitin ligase complex (ASK-cullin-F-box) containing MAX2B and KAI2IA in response to (-)-germacrene D in the stigma. The chain is F-box protein MAX2 homolog B from Petunia hybrida (Petunia).